The chain runs to 238 residues: Pyridoxine 5'-phosphate synthase (238 aa).

3-amino-2-oxopropyl phosphate-binding residues include asparagine 7 and arginine 18. Histidine 43 functions as the Proton acceptor in the catalytic mechanism. The 1-deoxy-D-xylulose 5-phosphate site is built by arginine 45 and histidine 50. Glutamate 70 (proton acceptor) is an active-site residue. Threonine 100 lines the 1-deoxy-D-xylulose 5-phosphate pocket. The active-site Proton donor is the histidine 190. 3-amino-2-oxopropyl phosphate is bound by residues aspartate 191 and 213 to 214; that span reads GH.

It belongs to the PNP synthase family. As to quaternary structure, homooctamer; tetramer of dimers.

Its subcellular location is the cytoplasm. It catalyses the reaction 3-amino-2-oxopropyl phosphate + 1-deoxy-D-xylulose 5-phosphate = pyridoxine 5'-phosphate + phosphate + 2 H2O + H(+). The protein operates within cofactor biosynthesis; pyridoxine 5'-phosphate biosynthesis; pyridoxine 5'-phosphate from D-erythrose 4-phosphate: step 5/5. Catalyzes the complicated ring closure reaction between the two acyclic compounds 1-deoxy-D-xylulose-5-phosphate (DXP) and 3-amino-2-oxopropyl phosphate (1-amino-acetone-3-phosphate or AAP) to form pyridoxine 5'-phosphate (PNP) and inorganic phosphate. The sequence is that of Pyridoxine 5'-phosphate synthase from Porphyromonas gingivalis (strain ATCC 33277 / DSM 20709 / CIP 103683 / JCM 12257 / NCTC 11834 / 2561).